The sequence spans 254 residues: MLAKPRPLDHIGDADDGVAAKAAGLDALYGHLKPLEIIERSARELFHDEIAAVSSFGADSAVLLHMIAEIDRTLPVIFLDTGKHFEETLGYRDALVADFGLTNIQVIKPEEAALARIDPTGNLHQSNTDACCDVRKVEPLARGVAPFRAWFTGRKRFQASTRAALPVFEAVGARIRINPLAHWTTSDQADYMRAHALRENPLVAYGYLSIGCFPCTQPVQPGEDARSGRWAGHAKTECGIHLSGLEVSLTDASL.

Positions 131, 132, 212, and 215 each coordinate [4Fe-4S] cluster. Catalysis depends on Cys-238, which acts as the Nucleophile; cysteine thiosulfonate intermediate.

It belongs to the PAPS reductase family. CysH subfamily. [4Fe-4S] cluster serves as cofactor.

It is found in the cytoplasm. The catalysed reaction is [thioredoxin]-disulfide + sulfite + AMP + 2 H(+) = adenosine 5'-phosphosulfate + [thioredoxin]-dithiol. It functions in the pathway sulfur metabolism; hydrogen sulfide biosynthesis; sulfite from sulfate. Catalyzes the formation of sulfite from adenosine 5'-phosphosulfate (APS) using thioredoxin as an electron donor. This is Adenosine 5'-phosphosulfate reductase from Mesorhizobium japonicum (strain LMG 29417 / CECT 9101 / MAFF 303099) (Mesorhizobium loti (strain MAFF 303099)).